We begin with the raw amino-acid sequence, 305 residues long: Tyrosine recombinase XerC (305 aa).

Residues 1–93 enclose the Core-binding (CB) domain; it reads MVLDGFAAYF…AWRQYCAWLV (93 aa). The Tyr recombinase domain occupies 114–294; that stretch reads RVPKALPQEW…DFDHIARLYD (181 aa). Active-site residues include Arg-155, Lys-179, His-246, Arg-249, and His-272. Tyr-281 (O-(3'-phospho-DNA)-tyrosine intermediate) is an active-site residue.

This sequence belongs to the 'phage' integrase family. XerC subfamily. In terms of assembly, forms a cyclic heterotetrameric complex composed of two molecules of XerC and two molecules of XerD.

The protein resides in the cytoplasm. Functionally, site-specific tyrosine recombinase, which acts by catalyzing the cutting and rejoining of the recombining DNA molecules. The XerC-XerD complex is essential to convert dimers of the bacterial chromosome into monomers to permit their segregation at cell division. It also contributes to the segregational stability of plasmids. The protein is Tyrosine recombinase XerC of Neisseria gonorrhoeae (strain ATCC 700825 / FA 1090).